The primary structure comprises 140 residues: Protein archease (140 aa).

3 residues coordinate Ca(2+): Asp-11, Asp-139, and Leu-140.

Belongs to the archease family.

In terms of biological role, activates the tRNA-splicing ligase complex by facilitating the enzymatic turnover of catalytic subunit RtcB. Acts by promoting the guanylylation of RtcB, a key intermediate step in tRNA ligation. Can also alter the NTP specificity of RtcB such that ATP, dGTP or ITP is used efficiently. The polypeptide is Protein archease (Methanopyrus kandleri (strain AV19 / DSM 6324 / JCM 9639 / NBRC 100938)).